The chain runs to 160 residues: Probable NADH dehydrogenase [ubiquinone] 1 beta subcomplex subunit 2, mitochondrial (160 aa).

Belongs to the complex I NDUFB2 subunit family. In terms of assembly, complex I is composed of 45 different subunits.

It is found in the mitochondrion inner membrane. Accessory subunit of the mitochondrial membrane respiratory chain NADH dehydrogenase (Complex I), that is believed not to be involved in catalysis. Complex I functions in the transfer of electrons from NADH to the respiratory chain. The immediate electron acceptor for the enzyme is believed to be ubiquinone. The protein is Probable NADH dehydrogenase [ubiquinone] 1 beta subcomplex subunit 2, mitochondrial of Caenorhabditis elegans.